Here is a 704-residue protein sequence, read N- to C-terminus: MATCPPFDFSTKYYDGDGGCQRQSSFFGGTTVLDQGVGYAVILGFGAFFAVFTSFLVWLEKRYVGARHTSEWFNTAGRNVKTGLIASVIVSQWTWAATILQSSNVAWQYGVSGPFWYASGATIQVLLFGVMAIEIKRKAPNAHTVCEIVKARWGTATHIVFLVFCLATNVVVTAMLLLGGSAVVNALTGVNLYAASFLIPLGVVVYTLAGGLKATFLASYVHSVIVHVALVVFVFLVYTSSKELGSPSVVYDRLKDMVAKSRSCTEPLSHHGQACGPVDGNFRGSYLTMLSSGGAVFGLINIVGNFGTVFVDNGYWVSAIAARPSSTHKGYLLGGLVWFAVPFSLATSLGLGALALDLPISKDEADRGLVPPATAIALMGKSGSLLLLTMLFMAVTSAGSSELIAVSSLFTYDIYRTYINPRATGRQILKISRCAVLGFGCFMGILAVVLNKAGVSLGWMYLAMGVLIGSAVIPIAFMLLWSKANAFGAILGATSGCVFGIITWLTTAKTQYGRVDLDSTGKNGPMLAGNLVAILTGGLIHAVCSLVRPQNYDWSTTREIKVVEAYASGDEDVDVPAEELREEKLRRAKAWIVKWGLVFTILIVVIWPVLSLPARVFSRGYFWFWAIVAIAWGTIGSIVIIGLPLVESWDTIKSVCMGMFTNDRVMKKLDDLNHRLRALTMAVPEAEKIYLLELEKTKKNDEEG.

Helical transmembrane passes span 39 to 59, 80 to 100, 115 to 135, 159 to 179, 192 to 212, 216 to 236, 291 to 311, 336 to 356, 388 to 408, 435 to 455, 461 to 481, 486 to 506, 527 to 547, 590 to 610, and 622 to 642; these read YAVILGFGAFFAVFTSFLVWL, VKTGLIASVIVSQWTWAATIL, FWYASGATIQVLLFGVMAIEI, IVFLVFCLATNVVVTAMLLLG, LYAASFLIPLGVVVYTLAGGL, FLASYVHSVIVHVALVVFVFL, SSGGAVFGLINIVGNFGTVFV, LVWFAVPFSLATSLGLGALAL, LTMLFMAVTSAGSSELIAVSS, AVLGFGCFMGILAVVLNKAGV, YLAMGVLIGSAVIPIAFMLLW, AFGAILGATSGCVFGIITWLT, LAGNLVAILTGGLIHAVCSLV, AWIVKWGLVFTILIVVIWPVL, and FWFWAIVAIAWGTIGSIVIIG.

Belongs to the sodium:solute symporter (SSF) (TC 2.A.21) family. Expressed in root rhizodermis, including root hairs and cortex in more basal root zones. Expressed in shoots.

Its subcellular location is the cell membrane. In terms of biological role, high-affinity urea-proton symporter involved in the active transport of urea across the plasma membrane into root cells. May play an important role in urea uptake by plant cells at low external urea concentrations. This chain is Urea-proton symporter DUR3 (DUR3), found in Arabidopsis thaliana (Mouse-ear cress).